Here is a 173-residue protein sequence, read N- to C-terminus: Mitochondrial holo-[acyl-carrier-protein] synthase (173 aa).

This sequence belongs to the P-Pant transferase superfamily. AcpS family.

Its subcellular location is the mitochondrion. It catalyses the reaction apo-[ACP] + CoA = holo-[ACP] + adenosine 3',5'-bisphosphate + H(+). Its function is as follows. Transfers the 4'-phosphopantetheine moiety from coenzyme A to a Ser of mitochondrial acyl-carrier-protein. This chain is Mitochondrial holo-[acyl-carrier-protein] synthase (PPT2), found in Saccharomyces cerevisiae (strain ATCC 204508 / S288c) (Baker's yeast).